Reading from the N-terminus, the 122-residue chain is MSTITKDQILEGVAALSVMEIVELISAMEEKFGVSAAAVAAGPAAAAEAVEEQTEFNVVLASFGDNKVAVIKAVRGATGLGLKEAKDLVESAPAVLKEGVNKDEAESLKKSLEEAGAAVEIK.

The protein belongs to the bacterial ribosomal protein bL12 family. As to quaternary structure, homodimer. Part of the ribosomal stalk of the 50S ribosomal subunit. Forms a multimeric L10(L12)X complex, where L10 forms an elongated spine to which 2 to 4 L12 dimers bind in a sequential fashion. Binds GTP-bound translation factors.

Functionally, forms part of the ribosomal stalk which helps the ribosome interact with GTP-bound translation factors. Is thus essential for accurate translation. In Yersinia enterocolitica serotype O:8 / biotype 1B (strain NCTC 13174 / 8081), this protein is Large ribosomal subunit protein bL12.